The following is a 615-amino-acid chain: Ectoine/glycine betaine/proline transporter EctP (615 aa).

A run of 12 helical transmembrane segments spans residues 24–44, 62–82, 102–122, 156–176, 207–227, 240–260, 275–295, 329–349, 360–380, 417–437, 463–483, and 489–509; these read FIFS…IALG, LGWM…GIFA, IVWF…FWGV, FGIH…YFIY, LAIV…VLQI, VSWV…ISVA, IAMA…LTLL, WTVF…MFVA, FIGG…SIFG, LTGI…ITSI, WACT…SSGI, and VVII…FSLL. Disordered regions lie at residues 524–562 and 589–615; these read TRQW…LEHD and PEEA…EYDI. Composition is skewed to basic and acidic residues over residues 526–540 and 600–615; these read QWEK…EEHS and KIVE…EYDI.

It belongs to the BCCT transporter (TC 2.A.15) family.

It localises to the cell membrane. Its function is as follows. Involved in the uptake of osmoprotectants. Can transport ectoine, proline and glycine betaine. Na(+) is probably the coupling ion. This Corynebacterium glutamicum (strain ATCC 13032 / DSM 20300 / JCM 1318 / BCRC 11384 / CCUG 27702 / LMG 3730 / NBRC 12168 / NCIMB 10025 / NRRL B-2784 / 534) protein is Ectoine/glycine betaine/proline transporter EctP.